A 189-amino-acid chain; its full sequence is Glycerol-3-phosphate acyltransferase (189 aa).

5 helical membrane-spanning segments follow: residues 1 to 21, 50 to 70, 81 to 101, 111 to 131, and 151 to 171; these read MFWSLALLAYLLGSLSFAIVL, KLAILTLLGDLCKGMLPVLLA, AWVGICAVLGHLFPVYFRFQG, MLMALYFPAALLAIGAWVLTF, and LLAWREPEALLPMTVLTLMIV.

It belongs to the PlsY family. Probably interacts with PlsX.

The protein localises to the cell inner membrane. It catalyses the reaction an acyl phosphate + sn-glycerol 3-phosphate = a 1-acyl-sn-glycero-3-phosphate + phosphate. It participates in lipid metabolism; phospholipid metabolism. In terms of biological role, catalyzes the transfer of an acyl group from acyl-phosphate (acyl-PO(4)) to glycerol-3-phosphate (G3P) to form lysophosphatidic acid (LPA). This enzyme utilizes acyl-phosphate as fatty acyl donor, but not acyl-CoA or acyl-ACP. This chain is Glycerol-3-phosphate acyltransferase, found in Pseudomonas entomophila (strain L48).